Consider the following 236-residue polypeptide: MGQKVNPNGIRLGIIKSWSSTWYANTKEFSKNLISDFKVREFLKKSLSKAYVSKLIIERPAKSIRINIYTARPGIVIGRKGEDVDKLRKEISNITGVPAQISITEIKRPELDAKLVSENIASQLERRIMFRRAMKRAVQNAIRLGAKGIKVEVSGRLGGAEIARKEWYREGRVPLHTFRADIDYNTSEAHTTYGIIGVKVTIFKGEILGNSSPYINEKKYMPTKKGNKKIRKYTKE.

Residues 39 to 107 (VREFLKKSLS…PAQISITEIK (69 aa)) enclose the KH type-2 domain.

Belongs to the universal ribosomal protein uS3 family. Part of the 30S ribosomal subunit. Forms a tight complex with proteins S10 and S14.

Functionally, binds the lower part of the 30S subunit head. Binds mRNA in the 70S ribosome, positioning it for translation. The protein is Small ribosomal subunit protein uS3 of Wigglesworthia glossinidia brevipalpis.